The sequence spans 354 residues: Ferredoxin--NADP reductase, chloroplastic (354 aa).

Residues 1–35 constitute a chloroplast transit peptide; the sequence is MASLRKPSNHADRACSRRLRVATRVAGRRMCRPVA. Positions 69–198 constitute an FAD-binding FR-type domain; that stretch reads KAPFKAKVRS…TGPTGKVLLL (130 aa). Residues Lys-118 and Lys-124 each carry the N6,N6,N6-trimethyllysine modification. FAD is bound by residues 130 to 133, 151 to 153, and Tyr-157; these read RLYS and CVR. Ser-133 and Arg-153 together coordinate NADP(+). Lys-170 bears the N6,N6-dimethyllysine mark. Residues 172 to 174 and Thr-213 each bind FAD; that span reads LCS. Residues Thr-213, 245–246, 275–276, Lys-285, 313–314, and Glu-352 contribute to the NADP(+) site; these read VG, SR, and GL.

The protein belongs to the ferredoxin--NADP reductase type 1 family. Requires FAD as cofactor.

The protein resides in the plastid. It localises to the chloroplast stroma. It is found in the chloroplast thylakoid membrane. The catalysed reaction is 2 reduced [2Fe-2S]-[ferredoxin] + NADP(+) + H(+) = 2 oxidized [2Fe-2S]-[ferredoxin] + NADPH. It functions in the pathway energy metabolism; photosynthesis. Its function is as follows. May play a key role in regulating the relative amounts of cyclic and non-cyclic electron flow to meet the demands of the plant for ATP and reducing power. In Chlamydomonas reinhardtii (Chlamydomonas smithii), this protein is Ferredoxin--NADP reductase, chloroplastic (PETH).